Consider the following 269-residue polypeptide: Eukaryotic translation initiation factor 3 subunit G-1 (269 aa).

One can recognise an RRM domain in the interval 188–266; sequence AAIRISNLSE…LILSVEWSKP (79 aa).

This sequence belongs to the eIF-3 subunit G family. Component of the eukaryotic translation initiation factor 3 (eIF-3) complex. The eIF-3 complex interacts with pix.

The protein resides in the cytoplasm. Its function is as follows. RNA-binding component of the eukaryotic translation initiation factor 3 (eIF-3) complex, which is involved in protein synthesis of a specialized repertoire of mRNAs and, together with other initiation factors, stimulates binding of mRNA and methionyl-tRNAi to the 40S ribosome. The eIF-3 complex specifically targets and initiates translation of a subset of mRNAs involved in cell proliferation. This subunit can bind 18S rRNA. The protein is Eukaryotic translation initiation factor 3 subunit G-1 of Drosophila persimilis (Fruit fly).